Consider the following 326-residue polypeptide: Malate dehydrogenase (326 aa).

Residue 12-18 coordinates NAD(+); sequence GGTGQIA. 2 residues coordinate substrate: arginine 93 and arginine 99. Residues asparagine 106, glutamine 113, and 130–132 contribute to the NAD(+) site; that span reads VGN. Substrate-binding residues include asparagine 132 and arginine 163. The active-site Proton acceptor is the histidine 188.

The protein belongs to the LDH/MDH superfamily. MDH type 2 family.

The enzyme catalyses (S)-malate + NAD(+) = oxaloacetate + NADH + H(+). Catalyzes the reversible oxidation of malate to oxaloacetate. This Chlamydia muridarum (strain MoPn / Nigg) protein is Malate dehydrogenase.